Consider the following 161-residue polypeptide: Regulator of ribonuclease activity A (161 aa).

The protein belongs to the RraA family. In terms of assembly, homotrimer. Binds to both RNA-binding sites in the C-terminal region of Rne and to RhlB.

It localises to the cytoplasm. Globally modulates RNA abundance by binding to RNase E (Rne) and regulating its endonucleolytic activity. Can modulate Rne action in a substrate-dependent manner by altering the composition of the degradosome. Modulates RNA-binding and helicase activities of the degradosome. In Shigella boydii serotype 18 (strain CDC 3083-94 / BS512), this protein is Regulator of ribonuclease activity A.